The sequence spans 400 residues: Formate-dependent phosphoribosylglycinamide formyltransferase (400 aa).

Residues 22-23 (EL) and Glu-82 each bind N(1)-(5-phospho-beta-D-ribosyl)glycinamide. ATP is bound by residues Arg-114, Lys-155, 160-165 (SSGKGQ), 195-198 (EGFV), and Glu-203. Residues 119–308 (RLAAEELGLS…EFALHARALL (190 aa)) enclose the ATP-grasp domain. Mg(2+) contacts are provided by Glu-267 and Glu-279. N(1)-(5-phospho-beta-D-ribosyl)glycinamide-binding positions include Asp-286, Lys-356, and 363–364 (RR).

It belongs to the PurK/PurT family. Homodimer.

It carries out the reaction N(1)-(5-phospho-beta-D-ribosyl)glycinamide + formate + ATP = N(2)-formyl-N(1)-(5-phospho-beta-D-ribosyl)glycinamide + ADP + phosphate + H(+). The protein operates within purine metabolism; IMP biosynthesis via de novo pathway; N(2)-formyl-N(1)-(5-phospho-D-ribosyl)glycinamide from N(1)-(5-phospho-D-ribosyl)glycinamide (formate route): step 1/1. In terms of biological role, involved in the de novo purine biosynthesis. Catalyzes the transfer of formate to 5-phospho-ribosyl-glycinamide (GAR), producing 5-phospho-ribosyl-N-formylglycinamide (FGAR). Formate is provided by PurU via hydrolysis of 10-formyl-tetrahydrofolate. The polypeptide is Formate-dependent phosphoribosylglycinamide formyltransferase (Hahella chejuensis (strain KCTC 2396)).